The chain runs to 530 residues: Ubiquitin carboxyl-terminal hydrolase 17-like protein 20 (530 aa).

The USP domain maps to 80-375 (AGLQNMGNTC…QAYVLFYIQK (296 aa)). C89 functions as the Nucleophile in the catalytic mechanism. H334 serves as the catalytic Proton acceptor. 2 stretches are compositionally biased toward basic and acidic residues: residues 382–392 (SESVSRGREPR) and 398–413 (DTDR…RDHP). 2 disordered regions span residues 382–413 (SESV…RDHP) and 509–530 (RGRA…LVCQ). Basic residues predominate over residues 510–524 (GRARRSKGKNKHSKR).

This sequence belongs to the peptidase C19 family. USP17 subfamily.

The protein localises to the nucleus. It localises to the endoplasmic reticulum. It carries out the reaction Thiol-dependent hydrolysis of ester, thioester, amide, peptide and isopeptide bonds formed by the C-terminal Gly of ubiquitin (a 76-residue protein attached to proteins as an intracellular targeting signal).. In terms of biological role, deubiquitinating enzyme that removes conjugated ubiquitin from specific proteins to regulate different cellular processes that may include cell proliferation, progression through the cell cycle, apoptosis, cell migration, and the cellular response to viral infection. In Homo sapiens (Human), this protein is Ubiquitin carboxyl-terminal hydrolase 17-like protein 20 (USP17L20).